Reading from the N-terminus, the 257-residue chain is Gamma-secretase subunit APH-1B (257 aa).

The next 7 helical transmembrane spans lie at 5-25 (VFFGCAFIAFGPALALYVFTI), 32-52 (VIFLIAGAFFWLVSLLLSSVF), 66-86 (PVQNYLLIFGVLLSVCIQELF), 115-135 (LLAYVSGLGFGIMSGVFSFVN), 160-180 (AFMTLVVIMLHVFWGVVFFDG), 186-206 (WYTLLTVLLTHLVVSTQTFLS), and 213-233 (LVTAYIIMVLMGIWAFYVAGG).

This sequence belongs to the APH-1 family. Probable component of the gamma-secretase complex, a complex composed of a presenilin homodimer (PSEN1 or PSEN2), nicastrin (NCSTN), APH1 (APH1A or APH1B) and PEN2. Such minimal complex is sufficient for secretase activity, although other components may exist. Interacts with PSEN1 and PSEN2.

The protein localises to the membrane. Its function is as follows. Probable subunit of the gamma-secretase complex, an endoprotease complex that catalyzes the intramembrane cleavage of integral proteins such as Notch receptors and APP (amyloid-beta precursor protein). It probably represents a stabilizing cofactor for the presenilin homodimer that promotes the formation of a stable complex. Probably present in a minority of gamma-secretase complexes compared to APH1A. The protein is Gamma-secretase subunit APH-1B (Aph1b) of Mus musculus (Mouse).